The primary structure comprises 477 residues: Glycogen synthase (477 aa).

Lys15 provides a ligand contact to ADP-alpha-D-glucose.

It belongs to the glycosyltransferase 1 family. Bacterial/plant glycogen synthase subfamily.

It carries out the reaction [(1-&gt;4)-alpha-D-glucosyl](n) + ADP-alpha-D-glucose = [(1-&gt;4)-alpha-D-glucosyl](n+1) + ADP + H(+). It functions in the pathway glycan biosynthesis; glycogen biosynthesis. Functionally, synthesizes alpha-1,4-glucan chains using ADP-glucose. This is Glycogen synthase from Edwardsiella ictaluri (strain 93-146).